The following is a 149-amino-acid chain: Protein FAM72A (149 aa).

Belongs to the FAM72 family. In terms of assembly, interacts with UNG. In terms of tissue distribution, may be up-regulated in malignant colon cancers, compared to normal colon and colon adenomas. Expression is also elevated in other common cancer types, including breast, lung, uterus, and ovary.

It is found in the cytoplasm. The protein localises to the mitochondrion. Its function is as follows. May play a role in the regulation of cellular reactive oxygen species metabolism. May participate in cell growth regulation. The polypeptide is Protein FAM72A (FAM72A) (Homo sapiens (Human)).